The chain runs to 813 residues: Homeobox-leucine zipper protein ROC4 (813 aa).

The disordered stretch occupies residues 62–112; that stretch reads EVENEMSRSGSDHLDVVSCGDAGGGGGDDDDDEDAEHGNPPKRKKRYHRHT. Residues 101–112 are compositionally biased toward basic residues; the sequence is PPKRKKRYHRHT. A DNA-binding region (homeobox) is located at residues 104-163; it reads RKKRYHRHTPQQIQELEAMFKECPHPDEKQRAELSKRLGLEPRQVKFWFQNRRTQMKMQL. The stretch at 152–191 forms a coiled coil; sequence FQNRRTQMKMQLERHENSLLKQENDKLRSENLSIREATSN. The region spanning 306–559 is the START domain; sequence AGIDKSLFLE…LQRQCECLAL (254 aa).

It belongs to the HD-ZIP homeobox family. Class IV subfamily.

The protein localises to the nucleus. In terms of biological role, probable transcription factor. The protein is Homeobox-leucine zipper protein ROC4 (ROC4) of Oryza sativa subsp. japonica (Rice).